A 376-amino-acid polypeptide reads, in one-letter code: Actin-related protein T1 (376 aa).

Belongs to the actin family.

The protein localises to the cytoplasm. Its subcellular location is the cytoskeleton. It localises to the nucleus. The protein resides in the cytoplasmic vesicle. It is found in the secretory vesicle. The protein localises to the acrosome. Its function is as follows. Negatively regulates the Hedgehog (SHH) signaling. Binds to the promoter of the SHH signaling mediator, GLI1, and inhibits its expression. This Mus musculus (Mouse) protein is Actin-related protein T1 (Actrt1).